Reading from the N-terminus, the 44-residue chain is uncharacterized protein (44 aa).

This is an uncharacterized protein from Bacillus subtilis (Bacteriophage phi-105).